We begin with the raw amino-acid sequence, 209 residues long: Uracil phosphoribosyltransferase (209 aa).

5-phospho-alpha-D-ribose 1-diphosphate-binding positions include Arg79, Arg104, and 131–139 (DPMLATGNS). Uracil-binding positions include Ile194 and 199-201 (GDA). 5-phospho-alpha-D-ribose 1-diphosphate is bound at residue Asp200.

Belongs to the UPRTase family. Mg(2+) serves as cofactor.

The catalysed reaction is UMP + diphosphate = 5-phospho-alpha-D-ribose 1-diphosphate + uracil. Its pathway is pyrimidine metabolism; UMP biosynthesis via salvage pathway; UMP from uracil: step 1/1. Allosterically activated by GTP. Catalyzes the conversion of uracil and 5-phospho-alpha-D-ribose 1-diphosphate (PRPP) to UMP and diphosphate. The chain is Uracil phosphoribosyltransferase from Delftia acidovorans (strain DSM 14801 / SPH-1).